The chain runs to 341 residues: Uroporphyrinogen decarboxylase (341 aa).

Substrate-binding positions include 23–27 (RQAGR), aspartate 73, tyrosine 148, serine 203, and histidine 318.

Belongs to the uroporphyrinogen decarboxylase family. Homodimer.

The protein localises to the cytoplasm. It carries out the reaction uroporphyrinogen III + 4 H(+) = coproporphyrinogen III + 4 CO2. It functions in the pathway porphyrin-containing compound metabolism; protoporphyrin-IX biosynthesis; coproporphyrinogen-III from 5-aminolevulinate: step 4/4. Functionally, catalyzes the decarboxylation of four acetate groups of uroporphyrinogen-III to yield coproporphyrinogen-III. The sequence is that of Uroporphyrinogen decarboxylase from Brucella anthropi (strain ATCC 49188 / DSM 6882 / CCUG 24695 / JCM 21032 / LMG 3331 / NBRC 15819 / NCTC 12168 / Alc 37) (Ochrobactrum anthropi).